The primary structure comprises 1415 residues: DNA-directed RNA polymerase subunit beta'' (1415 aa).

Zn(2+) contacts are provided by C217, C291, C298, and C301.

Belongs to the RNA polymerase beta' chain family. RpoC2 subfamily. In terms of assembly, in plastids the minimal PEP RNA polymerase catalytic core is composed of four subunits: alpha, beta, beta', and beta''. When a (nuclear-encoded) sigma factor is associated with the core the holoenzyme is formed, which can initiate transcription. It depends on Zn(2+) as a cofactor.

It is found in the plastid. Its subcellular location is the chloroplast. The enzyme catalyses RNA(n) + a ribonucleoside 5'-triphosphate = RNA(n+1) + diphosphate. Functionally, DNA-dependent RNA polymerase catalyzes the transcription of DNA into RNA using the four ribonucleoside triphosphates as substrates. This is DNA-directed RNA polymerase subunit beta'' from Phaeodactylum tricornutum (strain CCAP 1055/1).